The following is a 376-amino-acid chain: Putative glutamate--cysteine ligase 2 (376 aa).

Belongs to the glutamate--cysteine ligase type 2 family. YbdK subfamily.

It catalyses the reaction L-cysteine + L-glutamate + ATP = gamma-L-glutamyl-L-cysteine + ADP + phosphate + H(+). Functionally, ATP-dependent carboxylate-amine ligase which exhibits weak glutamate--cysteine ligase activity. In Mycolicibacterium paratuberculosis (strain ATCC BAA-968 / K-10) (Mycobacterium paratuberculosis), this protein is Putative glutamate--cysteine ligase 2.